Consider the following 313-residue polypeptide: Aspartate carbamoyltransferase catalytic subunit (313 aa).

Carbamoyl phosphate is bound by residues Arg-59 and Thr-60. Residue Lys-87 participates in L-aspartate binding. Positions 109, 137, and 140 each coordinate carbamoyl phosphate. Residues Arg-170 and Arg-224 each coordinate L-aspartate. 2 residues coordinate carbamoyl phosphate: Gly-265 and Pro-266.

This sequence belongs to the aspartate/ornithine carbamoyltransferase superfamily. ATCase family. Heterododecamer (2C3:3R2) of six catalytic PyrB chains organized as two trimers (C3), and six regulatory PyrI chains organized as three dimers (R2).

It catalyses the reaction carbamoyl phosphate + L-aspartate = N-carbamoyl-L-aspartate + phosphate + H(+). It functions in the pathway pyrimidine metabolism; UMP biosynthesis via de novo pathway; (S)-dihydroorotate from bicarbonate: step 2/3. Catalyzes the condensation of carbamoyl phosphate and aspartate to form carbamoyl aspartate and inorganic phosphate, the committed step in the de novo pyrimidine nucleotide biosynthesis pathway. This is Aspartate carbamoyltransferase catalytic subunit from Agrobacterium fabrum (strain C58 / ATCC 33970) (Agrobacterium tumefaciens (strain C58)).